Reading from the N-terminus, the 445-residue chain is Putative ATP-dependent RNA helicase L538 (445 aa).

The 138-residue stretch at 14–151 folds into the Helicase ATP-binding domain; it reads IEFMKNNRGV…AVLVNIVRGE (138 aa). An ATP-binding site is contributed by 27–34; the sequence is HSTGAGKT. Residues 101–104 carry the DEAH box motif; that stretch reads DEAH. The Helicase C-terminal domain occupies 273–442; the sequence is KIEDIMKYII…VIDASIENNY (170 aa).

It belongs to the DEAD box helicase family. DEAH subfamily.

Its subcellular location is the virion. It catalyses the reaction ATP + H2O = ADP + phosphate + H(+). The polypeptide is Putative ATP-dependent RNA helicase L538 (Acanthamoeba polyphaga mimivirus (APMV)).